Reading from the N-terminus, the 543-residue chain is MTKSNGEEPRMGSRMERFQQGVRKRTLLAKKKVQNITKEDVKSYLFRNAFVLLTVSAVIVGTILGFALRPYKMSYREVKYFSFPGELLMRMLQMLVLPLIISSLVTGMAALDSKASGKMGMRAVVYYMTTTIIAVVIGIIIVIIIHPGKGTKENMYREGKIVQVTAADAFLDLIRNMFPPNLVEACFKQFKTSYEKRSFKVPIQANETLLGAVINNVSEAMETLTRIREEMVPVPGSVNGVNALGLVVFSMCFGFVIGNMKEQGQALREFFDSLNEAIMRLVAVIMWYAPLGILFLIAGKILEMEDMGVIGGQLAMYTVTVIVGLLIHAVIVLPLLYFLVTRKNPWVFIGGLLQALITALGTSSSSATLPITFKCLEENNGVDKRITRFVLPVGATINMDGTALYEALAAIFIAQVNNFDLNFGQIITISITATAASIGAAGIPQAGLVTMVIVLTSVGLPTDDITLIIAVDWFLDRLRTTTNVLGDSLGAGIVEHLSRHELKNRDVEMGNSVIEENEMKKPYQLIAQDNEPEKPVADSETKM.

At 1 to 47 the chain is on the cytoplasmic side; the sequence is MTKSNGEEPRMGSRMERFQQGVRKRTLLAKKKVQNITKEDVKSYLFR. The helical transmembrane segment at 48–68 threads the bilayer; it reads NAFVLLTVSAVIVGTILGFAL. Residues 69–86 lie on the Extracellular side of the membrane; sequence RPYKMSYREVKYFSFPGE. Residues 87-108 traverse the membrane as a helical segment; sequence LLMRMLQMLVLPLIISSLVTGM. Residues 109–122 are Cytoplasmic-facing; the sequence is AALDSKASGKMGMR. A helical membrane pass occupies residues 123-145; sequence AVVYYMTTTIIAVVIGIIIVIII. Residues 146–236 are Extracellular-facing; the sequence is HPGKGTKENM…IREEMVPVPG (91 aa). The helical transmembrane segment at 237–260 threads the bilayer; it reads SVNGVNALGLVVFSMCFGFVIGNM. The Cytoplasmic segment spans residues 261–269; it reads KEQGQALRE. A helical transmembrane segment spans residues 270–297; the sequence is FFDSLNEAIMRLVAVIMWYAPLGILFLI. At 298–318 the chain is on the extracellular side; it reads AGKILEMEDMGVIGGQLAMYT. Residues 319 to 340 traverse the membrane as a helical segment; that stretch reads VTVIVGLLIHAVIVLPLLYFLV. The Cytoplasmic portion of the chain corresponds to 341–345; that stretch reads TRKNP. Positions 346-376 form an intramembrane region, discontinuously helical; sequence WVFIGGLLQALITALGTSSSSATLPITFKCL. Position 363-365 (363-365) interacts with L-aspartate; sequence SSS. Topologically, residues 377–385 are cytoplasmic; it reads EENNGVDKR. A helical transmembrane segment spans residues 386–412; it reads ITRFVLPVGATINMDGTALYEALAAIF. Na(+)-binding residues include Gly-394, Thr-396, and Asn-398. Thr-402 lines the L-aspartate pocket. Residues 413–425 lie on the Extracellular side of the membrane; it reads IAQVNNFDLNFGQ. Positions 426 to 459 form an intramembrane region, discontinuously helical; it reads IITISITATAASIGAAGIPQAGLVTMVIVLTSVG. An L-aspartate-binding site is contributed by 443–447; the sequence is IPQAG. The Extracellular segment spans residues 460-472; sequence LPTDDITLIIAVD. A helical membrane pass occupies residues 473–494; sequence WFLDRLRTTTNVLGDSLGAGIV. Positions 476 and 483 each coordinate L-aspartate. Residues Asn-483 and Asp-487 each contribute to the Na(+) site. Topologically, residues 495 to 543 are cytoplasmic; the sequence is EHLSRHELKNRDVEMGNSVIEENEMKKPYQLIAQDNEPEKPVADSETKM. Ser-512 bears the Phosphoserine mark. Residues 522-543 form a disordered region; that stretch reads PYQLIAQDNEPEKPVADSETKM. The segment covering 531 to 543 has biased composition (basic and acidic residues); it reads EPEKPVADSETKM.

Belongs to the dicarboxylate/amino acid:cation symporter (DAACS) (TC 2.A.23) family. SLC1A3 subfamily. Homotrimer. Glycosylated. As to expression, detected in brain and cerebellum. Both isoform GLAST-1 and GLAST-1A are expressed in bone and brain. In brain isoform GLAST-1 is highly enriched in the Purkinje cell layer in cerebellum.

It localises to the cell membrane. It carries out the reaction K(+)(in) + L-glutamate(out) + 3 Na(+)(out) + H(+)(out) = K(+)(out) + L-glutamate(in) + 3 Na(+)(in) + H(+)(in). It catalyses the reaction K(+)(in) + L-aspartate(out) + 3 Na(+)(out) + H(+)(out) = K(+)(out) + L-aspartate(in) + 3 Na(+)(in) + H(+)(in). The catalysed reaction is D-aspartate(out) + K(+)(in) + 3 Na(+)(out) + H(+)(out) = D-aspartate(in) + K(+)(out) + 3 Na(+)(in) + H(+)(in). Functionally, sodium-dependent, high-affinity amino acid transporter that mediates the uptake of L-glutamate and also L-aspartate and D-aspartate. Functions as a symporter that transports one amino acid molecule together with two or three Na(+) ions and one proton, in parallel with the counter-transport of one K(+) ion. Plays a redundant role in the rapid removal of released glutamate from the synaptic cleft, which is essential for terminating the postsynaptic action of glutamate. The chain is Excitatory amino acid transporter 1 (Slc1a3) from Rattus norvegicus (Rat).